Consider the following 1064-residue polypeptide: Phosphatidylinositol 4,5-bisphosphate 3-kinase catalytic subunit beta isoform (1064 aa).

The PI3K-ABD domain occupies 20–109 (SDGAISVDFL…LPVLKLVTRS (90 aa)). Residues 188–279 (GGKLVVAVHF…RTLPHFILVE (92 aa)) form the PI3K-RBD domain. The residue at position 318 (Ser-318) is a Phosphoserine. One can recognise a C2 PI3K-type domain in the interval 323-490 (NNNPFQITLV…NATALHITFP (168 aa)). A Nuclear localization signal (NLS) motif is present at residues 404–412 (KVKTKKSTK). The 178-residue stretch at 518–695 (ANVSSRGGKK…GVILEAYCRG (178 aa)) folds into the PIK helical domain. The region spanning 766-1047 (YVEKCKYMDS…KFDEALRESW (282 aa)) is the PI3K/PI4K catalytic domain. Residues 772–778 (YMDSKMK) form a G-loop region. Residues 910 to 918 (GIGDRHSDN) form a catalytic loop region. An activation loop region spans residues 929 to 955 (HIDFGHILGNFKSKFGIKRERVPFILT). At Ser-1064 the chain carries Phosphoserine; by autocatalysis.

Belongs to the PI3/PI4-kinase family. As to quaternary structure, heterodimer of a catalytic subunit PIK3CB and a p85 regulatory subunit (PIK3R1, PIK3R2 or PIK3R3). Interaction with PIK3R2 is required for nuclear localization and nuclear export. Part of a complex with PIK3R1 and PTEN. Binding to PTEN may antagonize the lipid kinase activity under normal growth conditions. Part of a complex involved in autophagosome formation composed of PIK3C3 and PIK3R4. Interacts with BECN1, ATG14 and RAB5A. In terms of processing, phosphorylation at Ser-1064 down-regulates lipid kinase activity. Post-translationally, autophosphorylation at Ser-1064 negatively regulates the phosphatidylinositol-4,5-bisphosphate 3-kinase activity.

The protein resides in the cytoplasm. It is found in the nucleus. It carries out the reaction a 1,2-diacyl-sn-glycero-3-phospho-(1D-myo-inositol-4,5-bisphosphate) + ATP = a 1,2-diacyl-sn-glycero-3-phospho-(1D-myo-inositol-3,4,5-trisphosphate) + ADP + H(+). The catalysed reaction is 1-octadecanoyl-2-(5Z,8Z,11Z,14Z)-eicosatetraenoyl-sn-glycero-3-phospho-1D-myo-inositol 4,5-bisphosphate + ATP = 1-octadecanoyl-2-(5Z,8Z,11Z,14Z-eicosatetraenoyl)-sn-glycero-3-phospho-(1D-myo-inositol 3,4,5-triphosphate) + ADP + H(+). It catalyses the reaction L-seryl-[protein] + ATP = O-phospho-L-seryl-[protein] + ADP + H(+). The protein operates within phospholipid metabolism; phosphatidylinositol phosphate biosynthesis. Functionally, phosphoinositide-3-kinase (PI3K) phosphorylates phosphatidylinositol (PI) derivatives at position 3 of the inositol ring to produce 3-phosphoinositides. Uses ATP and PtdIns(4,5)P2 (phosphatidylinositol 4,5-bisphosphate) to generate phosphatidylinositol 3,4,5-trisphosphate (PIP3). PIP3 plays a key role by recruiting PH domain-containing proteins to the membrane, including AKT1 and PDPK1, activating signaling cascades involved in cell growth, survival, proliferation, motility and morphology. Involved in the activation of AKT1 upon stimulation by G-protein coupled receptors (GPCRs) ligands such as CXCL12, sphingosine 1-phosphate, and lysophosphatidic acid. May also act downstream receptor tyrosine kinases. Required in different signaling pathways for stable platelet adhesion and aggregation. Plays a role in platelet activation signaling triggered by GPCRs, alpha-IIb/beta-3 integrins (ITGA2B/ ITGB3) and ITAM (immunoreceptor tyrosine-based activation motif)-bearing receptors such as GP6. Regulates the strength of adhesion of ITGA2B/ ITGB3 activated receptors necessary for the cellular transmission of contractile forces. Required for platelet aggregation induced by F2 (thrombin) and thromboxane A2 (TXA2). Has a role in cell survival. May have a role in cell migration. Involved in the early stage of autophagosome formation. Modulates the intracellular level of PtdIns3P (phosphatidylinositol 3-phosphate) and activates PIK3C3 kinase activity. May act as a scaffold, independently of its lipid kinase activity to positively regulate autophagy. May have a role in insulin signaling as scaffolding protein in which the lipid kinase activity is not required. May have a kinase-independent function in regulating cell proliferation and in clathrin-mediated endocytosis. Mediator of oncogenic signal in cell lines lacking PTEN. The lipid kinase activity is necessary for its role in oncogenic transformation. Required for the growth of ERBB2 and RAS driven tumors. Also has a protein kinase activity showing autophosphorylation. This chain is Phosphatidylinositol 4,5-bisphosphate 3-kinase catalytic subunit beta isoform (Pik3cb), found in Mus musculus (Mouse).